The following is a 256-amino-acid chain: MNTPVIAAEGLSIRVDGRTVLADISVAVAAGEIVTIVGPNGSGKSTFLRALIGALPAASGRVIRAPGLRIGYVPQKLAIDATLPITVSRFLSLPRRVPQDVAAEALARAGVPDLANRQMTDLSGGQFQRVLLARAVLERPHLLLLDEATQGLDQPGSAAFYEQIEEVRQDLGCAVVMVSHDLHVVMAASDRVLCMNGHICCEGTPEVVADAPEYRALFGTGTRGALALYRHQHSHRHDDDCGHDHGAEHMHPHGDR.

Residues 6–221 (IAAEGLSIRV…PEYRALFGTG (216 aa)) enclose the ABC transporter domain. An ATP-binding site is contributed by 38 to 45 (GPNGSGKS). The segment at 237 to 256 (HDDDCGHDHGAEHMHPHGDR) is disordered.

The protein belongs to the ABC transporter superfamily. Zinc importer (TC 3.A.1.15.5) family. In terms of assembly, the complex is composed of two ATP-binding proteins (ZnuC), two transmembrane proteins (ZnuB) and a solute-binding protein (ZnuA).

The protein resides in the cell inner membrane. It catalyses the reaction Zn(2+)(out) + ATP(in) + H2O(in) = Zn(2+)(in) + ADP(in) + phosphate(in) + H(+)(in). Part of the ABC transporter complex ZnuABC involved in zinc import. Responsible for energy coupling to the transport system. The sequence is that of Zinc import ATP-binding protein ZnuC from Ruegeria pomeroyi (strain ATCC 700808 / DSM 15171 / DSS-3) (Silicibacter pomeroyi).